The following is a 616-amino-acid chain: Chaperone protein HscA (616 aa).

Belongs to the heat shock protein 70 family.

Chaperone involved in the maturation of iron-sulfur cluster-containing proteins. Has a low intrinsic ATPase activity which is markedly stimulated by HscB. Involved in the maturation of IscU. The polypeptide is Chaperone protein HscA (Escherichia coli (strain SMS-3-5 / SECEC)).